Reading from the N-terminus, the 1214-residue chain is ATP-dependent helicase/nuclease subunit A (1214 aa).

The 457-residue stretch at 27-483 (HKRTAQQIEA…ILLKENFRSQ (457 aa)) folds into the UvrD-like helicase ATP-binding domain. 48 to 55 (ASAGSGKT) contacts ATP. A UvrD-like helicase C-terminal domain is found at 512–800 (QLVAGSEAQK…NLMTIHKSKG (289 aa)).

Belongs to the helicase family. AddA subfamily. In terms of assembly, heterodimer of AddA and AddB/RexB. The cofactor is Mg(2+).

It catalyses the reaction Couples ATP hydrolysis with the unwinding of duplex DNA by translocating in the 3'-5' direction.. The enzyme catalyses ATP + H2O = ADP + phosphate + H(+). Functionally, the heterodimer acts as both an ATP-dependent DNA helicase and an ATP-dependent, dual-direction single-stranded exonuclease. Recognizes the chi site generating a DNA molecule suitable for the initiation of homologous recombination. The AddA nuclease domain is required for chi fragment generation; this subunit has the helicase and 3' -&gt; 5' nuclease activities. This Streptococcus equi subsp. zooepidemicus (strain MGCS10565) protein is ATP-dependent helicase/nuclease subunit A.